The chain runs to 204 residues: Elongation factor Ts (204 aa).

The segment at 80-83 is involved in Mg(2+) ion dislocation from EF-Tu; sequence TDFV.

Belongs to the EF-Ts family.

It is found in the cytoplasm. In terms of biological role, associates with the EF-Tu.GDP complex and induces the exchange of GDP to GTP. It remains bound to the aminoacyl-tRNA.EF-Tu.GTP complex up to the GTP hydrolysis stage on the ribosome. The polypeptide is Elongation factor Ts (Caldicellulosiruptor bescii (strain ATCC BAA-1888 / DSM 6725 / KCTC 15123 / Z-1320) (Anaerocellum thermophilum)).